We begin with the raw amino-acid sequence, 356 residues long: Manganese-dependent ADP-ribose/CDP-alcohol diphosphatase (356 aa).

Residues Asp32, Gln34, Asp81, Asn117, His253, His290, and His292 each contribute to the Zn(2+) site.

It belongs to the ADPRibase-Mn family. Monomer. The cofactor is Mg(2+).

The enzyme catalyses CDP-choline + H2O = phosphocholine + CMP + 2 H(+). It catalyses the reaction ADP-D-ribose + H2O = D-ribose 5-phosphate + AMP + 2 H(+). The catalysed reaction is CDP-glycerol + H2O = sn-glycerol 3-phosphate + CMP + 2 H(+). Functionally, hydrolyzes ADP-ribose, IDP-ribose, CDP-glycerol, CDP-choline and CDP-ethanolamine, but not other non-reducing ADP-sugars or CDP-glucose. This is Manganese-dependent ADP-ribose/CDP-alcohol diphosphatase (adprm) from Xenopus laevis (African clawed frog).